A 948-amino-acid chain; its full sequence is Isoleucine--tRNA ligase (948 aa).

The short motif at Pro58 to His68 is the 'HIGH' region element. An L-isoleucyl-5'-AMP-binding site is contributed by Glu566. The 'KMSKS' region signature appears at Lys607–Ser611. Lys610 contributes to the ATP binding site. Residues Cys911, Cys914, Cys931, and Cys934 each coordinate Zn(2+).

This sequence belongs to the class-I aminoacyl-tRNA synthetase family. IleS type 1 subfamily. As to quaternary structure, monomer. It depends on Zn(2+) as a cofactor.

The protein localises to the cytoplasm. It catalyses the reaction tRNA(Ile) + L-isoleucine + ATP = L-isoleucyl-tRNA(Ile) + AMP + diphosphate. Its function is as follows. Catalyzes the attachment of isoleucine to tRNA(Ile). As IleRS can inadvertently accommodate and process structurally similar amino acids such as valine, to avoid such errors it has two additional distinct tRNA(Ile)-dependent editing activities. One activity is designated as 'pretransfer' editing and involves the hydrolysis of activated Val-AMP. The other activity is designated 'posttransfer' editing and involves deacylation of mischarged Val-tRNA(Ile). This chain is Isoleucine--tRNA ligase, found in Vibrio vulnificus (strain YJ016).